We begin with the raw amino-acid sequence, 450 residues long: 3-phosphoshikimate 1-carboxyvinyltransferase (450 aa).

Lys-28, Ser-29, and Arg-33 together coordinate 3-phosphoshikimate. Lys-28 is a binding site for phosphoenolpyruvate. Phosphoenolpyruvate is bound by residues Gly-100 and Arg-128. The 3-phosphoshikimate site is built by Ser-173, Gln-175, Asp-326, and Lys-353. Gln-175 is a binding site for phosphoenolpyruvate. Asp-326 functions as the Proton acceptor in the catalytic mechanism. Residues Arg-357 and Arg-402 each contribute to the phosphoenolpyruvate site.

It belongs to the EPSP synthase family. Monomer.

Its subcellular location is the cytoplasm. The catalysed reaction is 3-phosphoshikimate + phosphoenolpyruvate = 5-O-(1-carboxyvinyl)-3-phosphoshikimate + phosphate. It functions in the pathway metabolic intermediate biosynthesis; chorismate biosynthesis; chorismate from D-erythrose 4-phosphate and phosphoenolpyruvate: step 6/7. Catalyzes the transfer of the enolpyruvyl moiety of phosphoenolpyruvate (PEP) to the 5-hydroxyl of shikimate-3-phosphate (S3P) to produce enolpyruvyl shikimate-3-phosphate and inorganic phosphate. This is 3-phosphoshikimate 1-carboxyvinyltransferase from Brucella abortus biovar 1 (strain 9-941).